The following is a 384-amino-acid chain: UDP-4-amino-4-deoxy-L-arabinose--oxoglutarate aminotransferase (384 aa).

Lys182 is modified (N6-(pyridoxal phosphate)lysine).

Belongs to the DegT/DnrJ/EryC1 family. ArnB subfamily. Homodimer. Pyridoxal 5'-phosphate is required as a cofactor.

It catalyses the reaction UDP-4-amino-4-deoxy-beta-L-arabinose + 2-oxoglutarate = UDP-beta-L-threo-pentopyranos-4-ulose + L-glutamate. It functions in the pathway nucleotide-sugar biosynthesis; UDP-4-deoxy-4-formamido-beta-L-arabinose biosynthesis; UDP-4-deoxy-4-formamido-beta-L-arabinose from UDP-alpha-D-glucuronate: step 2/3. Its pathway is bacterial outer membrane biogenesis; lipopolysaccharide biosynthesis. In terms of biological role, catalyzes the conversion of UDP-4-keto-arabinose (UDP-Ara4O) to UDP-4-amino-4-deoxy-L-arabinose (UDP-L-Ara4N). The modified arabinose is attached to lipid A and is required for resistance to polymyxin and cationic antimicrobial peptides. The chain is UDP-4-amino-4-deoxy-L-arabinose--oxoglutarate aminotransferase from Yersinia pseudotuberculosis serotype O:1b (strain IP 31758).